A 308-amino-acid polypeptide reads, in one-letter code: Ribosomal RNA small subunit methyltransferase H (308 aa).

Residues 35 to 37 (GGH), Asp-54, Phe-80, Asp-101, and Gln-108 each bind S-adenosyl-L-methionine.

The protein belongs to the methyltransferase superfamily. RsmH family.

It is found in the cytoplasm. The catalysed reaction is cytidine(1402) in 16S rRNA + S-adenosyl-L-methionine = N(4)-methylcytidine(1402) in 16S rRNA + S-adenosyl-L-homocysteine + H(+). In terms of biological role, specifically methylates the N4 position of cytidine in position 1402 (C1402) of 16S rRNA. This chain is Ribosomal RNA small subunit methyltransferase H, found in Mycoplasma pneumoniae (strain ATCC 29342 / M129 / Subtype 1) (Mycoplasmoides pneumoniae).